Here is a 534-residue protein sequence, read N- to C-terminus: Cytochrome c oxidase subunit 1 (534 aa).

Residues 16–36 (VLYFIFSVFCGMAGTGMSMII) form a helical membrane-spanning segment. 2 residues coordinate Ca(2+): Glu-39 and Gly-44. A Fe(II)-heme a-binding site is contributed by His-62. A run of 6 helical transmembrane segments spans residues 64–84 (ILMVFFLVMPALIGGFGNYLL), 101–121 (ISFWLLPPALVCLVTSTLVES), 147–167 (AIFALHMTSISSLLGAINFIV), 183–203 (PLFVWAIFITAFLLLLSLPVL), 235–255 (LFWFFGHPEVYIMIVPAFGVI), and 267–287 (VFGEISMVYAMASIGLLGFLV). His-241 is a Cu cation binding site. Residues 241–245 (HPEVY) constitute a cross-link (1'-histidyl-3'-tyrosine (His-Tyr)). Tyr-245 serves as a coordination point for O2. 2 residues coordinate Cu cation: His-290 and His-291. The next 2 helical transmembrane spans lie at 310–330 (MIIAIPTGIKIFSWLATIYGG) and 338–358 (MMYAIAFLFLFTLGGFTGVAL). Mg(2+) contacts are provided by His-368 and Asp-369. 2 helical membrane passes run 372–392 (YVVAHFHYVLSMGAVFSMFAG) and 414–434 (FWLIFVGVNVIFLPMHFLGIN). His-376 provides a ligand contact to heme a3. Position 378 (His-378) interacts with Fe(II)-heme a. Position 441 (Pro-441) interacts with Ca(2+). A helical transmembrane segment spans residues 453–473 (VSSIGSFIAMISLILFIYILF).

Belongs to the heme-copper respiratory oxidase family. In terms of assembly, component of the cytochrome c oxidase (complex IV, CIV), a multisubunit enzyme composed of a catalytic core of 3 subunits and several supernumerary subunits. The complex exists as a monomer or a dimer and forms supercomplexes (SCs) in the inner mitochondrial membrane with ubiquinol-cytochrome c oxidoreductase (cytochrome b-c1 complex, complex III, CIII). Requires heme as cofactor. Cu cation is required as a cofactor.

The protein resides in the mitochondrion inner membrane. The enzyme catalyses 4 Fe(II)-[cytochrome c] + O2 + 8 H(+)(in) = 4 Fe(III)-[cytochrome c] + 2 H2O + 4 H(+)(out). The protein operates within energy metabolism; oxidative phosphorylation. Functionally, component of the cytochrome c oxidase, the last enzyme in the mitochondrial electron transport chain which drives oxidative phosphorylation. The respiratory chain contains 3 multisubunit complexes succinate dehydrogenase (complex II, CII), ubiquinol-cytochrome c oxidoreductase (cytochrome b-c1 complex, complex III, CIII) and cytochrome c oxidase (complex IV, CIV), that cooperate to transfer electrons derived from NADH and succinate to molecular oxygen, creating an electrochemical gradient over the inner membrane that drives transmembrane transport and the ATP synthase. Cytochrome c oxidase is the component of the respiratory chain that catalyzes the reduction of oxygen to water. Electrons originating from reduced cytochrome c in the intermembrane space (IMS) are transferred via the dinuclear copper A center (CU(A)) of subunit 2 and heme A of subunit 1 to the active site in subunit 1, a binuclear center (BNC) formed by heme A3 and copper B (CU(B)). The BNC reduces molecular oxygen to 2 water molecules using 4 electrons from cytochrome c in the IMS and 4 protons from the mitochondrial matrix. The sequence is that of Cytochrome c oxidase subunit 1 (COX1) from Vanderwaltozyma polyspora (strain ATCC 22028 / DSM 70294 / BCRC 21397 / CBS 2163 / NBRC 10782 / NRRL Y-8283 / UCD 57-17) (Kluyveromyces polysporus).